The following is a 447-amino-acid chain: GTPase Der (447 aa).

2 EngA-type G domains span residues 4 to 165 (KIIA…PEEE) and 180 to 357 (LQIV…KIWN). GTP is bound by residues 10–17 (GRPNVGKS), 57–61 (DTPGL), 119–122 (NKCE), 186–193 (GRPNAGKS), 233–237 (DTAGL), and 298–301 (NKWD). One can recognise a KH-like domain in the interval 358 to 443 (KKIATSKLNE…PIRFTYVKTK (86 aa)).

It belongs to the TRAFAC class TrmE-Era-EngA-EngB-Septin-like GTPase superfamily. EngA (Der) GTPase family. As to quaternary structure, associates with the 50S ribosomal subunit.

Functionally, GTPase that plays an essential role in the late steps of ribosome biogenesis. The protein is GTPase Der of Rickettsia akari (strain Hartford).